A 181-amino-acid polypeptide reads, in one-letter code: Inner membrane-spanning protein YciB (181 aa).

5 helical membrane-spanning segments follow: residues 8-28 (FPII…ATAA), 53-73 (ITLI…NAIF), 76-96 (WKPT…HFFG), 121-141 (LSWA…VYNF), and 149-169 (FKLF…AFYI).

It belongs to the YciB family.

Its subcellular location is the cell inner membrane. Its function is as follows. Plays a role in cell envelope biogenesis, maintenance of cell envelope integrity and membrane homeostasis. This Coxiella burnetii (strain CbuK_Q154) (Coxiella burnetii (strain Q154)) protein is Inner membrane-spanning protein YciB.